Consider the following 92-residue polypeptide: Small ribosomal subunit protein uS19c (92 aa).

This sequence belongs to the universal ribosomal protein uS19 family.

The protein localises to the plastid. Its subcellular location is the chloroplast. In terms of biological role, protein S19 forms a complex with S13 that binds strongly to the 16S ribosomal RNA. The protein is Small ribosomal subunit protein uS19c of Fagopyrum esculentum subsp. ancestrale (Wild buckwheat).